A 193-amino-acid polypeptide reads, in one-letter code: DNA damage-inducible transcript 4-like protein (193 aa).

It belongs to the DDIT4 family.

Its subcellular location is the cytoplasm. Functionally, inhibits cell growth by regulating the TOR signaling pathway upstream of the TSC1-TSC2 complex and downstream of AKT1. In Bos taurus (Bovine), this protein is DNA damage-inducible transcript 4-like protein (DDIT4L).